Consider the following 340-residue polypeptide: Ketol-acid reductoisomerase (NADP(+)) (340 aa).

The KARI N-terminal Rossmann domain occupies 2–182 (AELYYDNQAD…GCTRAGVLRT (181 aa)). Residues 25–28 (FGSQ), Ser51, Ser53, and 83–86 (DIGQ) contribute to the NADP(+) site. His108 is a catalytic residue. An NADP(+)-binding site is contributed by Gly134. Residues 183–328 (TFAEETETDL…RELRRMMPFV (146 aa)) enclose the KARI C-terminal knotted domain. Positions 191, 195, 227, and 231 each coordinate Mg(2+). Ser252 is a substrate binding site.

It belongs to the ketol-acid reductoisomerase family. Mg(2+) is required as a cofactor.

It catalyses the reaction (2R)-2,3-dihydroxy-3-methylbutanoate + NADP(+) = (2S)-2-acetolactate + NADPH + H(+). The catalysed reaction is (2R,3R)-2,3-dihydroxy-3-methylpentanoate + NADP(+) = (S)-2-ethyl-2-hydroxy-3-oxobutanoate + NADPH + H(+). It functions in the pathway amino-acid biosynthesis; L-isoleucine biosynthesis; L-isoleucine from 2-oxobutanoate: step 2/4. It participates in amino-acid biosynthesis; L-valine biosynthesis; L-valine from pyruvate: step 2/4. Involved in the biosynthesis of branched-chain amino acids (BCAA). Catalyzes an alkyl-migration followed by a ketol-acid reduction of (S)-2-acetolactate (S2AL) to yield (R)-2,3-dihydroxy-isovalerate. In the isomerase reaction, S2AL is rearranged via a Mg-dependent methyl migration to produce 3-hydroxy-3-methyl-2-ketobutyrate (HMKB). In the reductase reaction, this 2-ketoacid undergoes a metal-dependent reduction by NADPH to yield (R)-2,3-dihydroxy-isovalerate. The sequence is that of Ketol-acid reductoisomerase (NADP(+)) from Chloroflexus aggregans (strain MD-66 / DSM 9485).